A 425-amino-acid chain; its full sequence is Dihydroorotase (425 aa).

Zn(2+)-binding residues include His-56 and His-58. Residues 58–60 (HYR) and Asn-90 each bind substrate. Residues Asp-148, His-175, and His-228 each contribute to the Zn(2+) site. Asn-274 contributes to the substrate binding site. Asp-301 serves as a coordination point for Zn(2+). Asp-301 is an active-site residue. Substrate-binding positions include His-305 and 319 to 320 (FG).

The protein belongs to the metallo-dependent hydrolases superfamily. DHOase family. Class I DHOase subfamily. The cofactor is Zn(2+).

The enzyme catalyses (S)-dihydroorotate + H2O = N-carbamoyl-L-aspartate + H(+). Its pathway is pyrimidine metabolism; UMP biosynthesis via de novo pathway; (S)-dihydroorotate from bicarbonate: step 3/3. Functionally, catalyzes the reversible cyclization of carbamoyl aspartate to dihydroorotate. This is Dihydroorotase from Lactobacillus delbrueckii subsp. bulgaricus (strain ATCC BAA-365 / Lb-18).